The sequence spans 184 residues: Sec-independent protein translocase protein TatB (184 aa).

Residues 1-21 (MFDIGFSELVLLFVVGLIVLG) traverse the membrane as a helical segment. A compositionally biased stretch (acidic residues) spans 149–168 (AEEGEPMLEMGESDFSEDEQ). Positions 149-184 (AEEGEPMLEMGESDFSEDEQATASSNETIENIKEKV) are disordered.

The protein belongs to the TatB family. The Tat system comprises two distinct complexes: a TatABC complex, containing multiple copies of TatA, TatB and TatC subunits, and a separate TatA complex, containing only TatA subunits. Substrates initially bind to the TatABC complex, which probably triggers association of the separate TatA complex to form the active translocon.

Its subcellular location is the cell inner membrane. Its function is as follows. Part of the twin-arginine translocation (Tat) system that transports large folded proteins containing a characteristic twin-arginine motif in their signal peptide across membranes. Together with TatC, TatB is part of a receptor directly interacting with Tat signal peptides. TatB may form an oligomeric binding site that transiently accommodates folded Tat precursor proteins before their translocation. The polypeptide is Sec-independent protein translocase protein TatB (Histophilus somni (strain 129Pt) (Haemophilus somnus)).